Reading from the N-terminus, the 219-residue chain is Cytochrome b6 (219 aa).

Residues Ile-32–Phe-52 traverse the membrane as a helical segment. Cys-35 provides a ligand contact to heme c. His-86 and His-100 together coordinate heme b. 3 helical membrane passes run Ser-90 to Phe-110, Leu-116 to Tyr-136, and Ile-190 to Leu-210. Positions 191 and 206 each coordinate heme b.

It belongs to the cytochrome b family. PetB subfamily. In terms of assembly, the 4 large subunits of the cytochrome b6-f complex are cytochrome b6, subunit IV (17 kDa polypeptide, PetD), cytochrome f and the Rieske protein, while the 4 small subunits are PetG, PetL, PetM and PetN. The complex functions as a dimer. The cofactor is heme b. Heme c serves as cofactor.

It is found in the plastid. The protein localises to the chloroplast thylakoid membrane. In terms of biological role, component of the cytochrome b6-f complex, which mediates electron transfer between photosystem II (PSII) and photosystem I (PSI), cyclic electron flow around PSI, and state transitions. The chain is Cytochrome b6 from Heterocapsa triquetra (Dinoflagellate).